The primary structure comprises 271 residues: Aminoglycoside 3'-phosphotransferase (271 aa).

Asp-198 serves as the catalytic Proton acceptor.

This sequence belongs to the aminoglycoside phosphotransferase family.

The catalysed reaction is kanamycin A + ATP = kanamycin 3'-phosphate + ADP + H(+). In terms of biological role, resistance to kanamycin and structurally-related aminoglycosides, including amikacin. In Escherichia coli, this protein is Aminoglycoside 3'-phosphotransferase (aphA1).